Reading from the N-terminus, the 597-residue chain is Elongation factor 4 (597 aa).

Positions lysine 2 to glutamate 184 constitute a tr-type G domain. GTP-binding positions include aspartate 14–threonine 19 and asparagine 131–aspartate 134.

It belongs to the TRAFAC class translation factor GTPase superfamily. Classic translation factor GTPase family. LepA subfamily.

The protein resides in the cell inner membrane. It carries out the reaction GTP + H2O = GDP + phosphate + H(+). Functionally, required for accurate and efficient protein synthesis under certain stress conditions. May act as a fidelity factor of the translation reaction, by catalyzing a one-codon backward translocation of tRNAs on improperly translocated ribosomes. Back-translocation proceeds from a post-translocation (POST) complex to a pre-translocation (PRE) complex, thus giving elongation factor G a second chance to translocate the tRNAs correctly. Binds to ribosomes in a GTP-dependent manner. In Francisella tularensis subsp. mediasiatica (strain FSC147), this protein is Elongation factor 4.